A 360-amino-acid chain; its full sequence is Phenylalanine--tRNA ligase alpha subunit (360 aa).

Glutamate 260 provides a ligand contact to Mg(2+).

It belongs to the class-II aminoacyl-tRNA synthetase family. Phe-tRNA synthetase alpha subunit type 1 subfamily. As to quaternary structure, tetramer of two alpha and two beta subunits. Requires Mg(2+) as cofactor.

Its subcellular location is the cytoplasm. It catalyses the reaction tRNA(Phe) + L-phenylalanine + ATP = L-phenylalanyl-tRNA(Phe) + AMP + diphosphate + H(+). This is Phenylalanine--tRNA ligase alpha subunit from Methylobacterium radiotolerans (strain ATCC 27329 / DSM 1819 / JCM 2831 / NBRC 15690 / NCIMB 10815 / 0-1).